The chain runs to 439 residues: GTPase Der (439 aa).

2 consecutive EngA-type G domains span residues 4 to 169 (AMVA…PEND) and 177 to 352 (IKIA…EEYN). GTP is bound by residues 10–17 (GRPNVGKS), 57–61 (DTGGL), 120–123 (NKVD), 183–190 (GRPNVGKS), 230–234 (DTAGI), and 295–298 (NKWD). Residues 353-437 (KRITTGLLNN…PIVISTKKRG (85 aa)) form the KH-like domain.

The protein belongs to the TRAFAC class TrmE-Era-EngA-EngB-Septin-like GTPase superfamily. EngA (Der) GTPase family. In terms of assembly, associates with the 50S ribosomal subunit.

In terms of biological role, GTPase that plays an essential role in the late steps of ribosome biogenesis. This Caldanaerobacter subterraneus subsp. tengcongensis (strain DSM 15242 / JCM 11007 / NBRC 100824 / MB4) (Thermoanaerobacter tengcongensis) protein is GTPase Der.